Consider the following 97-residue polypeptide: Small ribosomal subunit protein bS6 (97 aa).

This sequence belongs to the bacterial ribosomal protein bS6 family.

Its function is as follows. Binds together with bS18 to 16S ribosomal RNA. The sequence is that of Small ribosomal subunit protein bS6 (rpsF) from Lactococcus lactis subsp. lactis (strain IL1403) (Streptococcus lactis).